The following is a 415-amino-acid chain: MHHDKRCKESNMKIVKAEVFVTCPGRNFVTLKITTEDGITGLGDATLNGRELSVASYLQDHLCPQLIGRDAHRIEDIWQFFYKGAYWRRGPVTMSAISAVDMALWDIKAKAANMPLYQLLGGASREGVMVYCHTTGHSIDEALDDYARHQELGFKAIRVQCGIPGMKTTYGMSKGKGLAYEPATKGQWPEEQLWSTEKYLDFMPKLFDAVRNKFGFNEHLLHDMHHRLTPIEAARFGKSIEDYRMFWMEDPTPAENQECFRLIRQHTVTPIAVGEVFNSIWDCKQLIEEQLIDYIRTTLTHAGGITGMRRIADFASLYQVRTGSHGPSDLSPVCMAAALHFDLWVPNFGVQEYMGYSEQMLEVFPHNWTFDNGYMHSGDKPGLGIEFDEKLAAKYPYEPAYLPVARLEDGTLWNW.

Substrate-binding residues include Asn48 and His133. Catalysis depends on Tyr170, which acts as the Proton donor/acceptor. Asp223 lines the Mg(2+) pocket. The active-site Proton donor/acceptor is His225. Mg(2+) contacts are provided by Glu249 and Glu275. Substrate-binding residues include Glu275, Arg296, His325, Asp329, and Glu352.

The protein belongs to the mandelate racemase/muconate lactonizing enzyme family. GalD subfamily. The cofactor is Mg(2+).

The enzyme catalyses D-mannonate = 2-dehydro-3-deoxy-D-gluconate + H2O. In terms of biological role, has low D-mannonate dehydratase activity (in vitro), suggesting that this is not a physiological substrate and that it has no significant role in D-mannonate degradation in vivo. Has no detectable activity with a panel of 70 other acid sugars (in vitro). The polypeptide is D-galactonate dehydratase family member RspA (rspA) (Escherichia coli (strain MS 21-1)).